We begin with the raw amino-acid sequence, 153 residues long: Large ribosomal subunit protein bL9 (153 aa).

This sequence belongs to the bacterial ribosomal protein bL9 family.

In terms of biological role, binds to the 23S rRNA. This chain is Large ribosomal subunit protein bL9, found in Blochmanniella pennsylvanica (strain BPEN).